A 158-amino-acid chain; its full sequence is NADH-quinone oxidoreductase subunit B (158 aa).

[4Fe-4S] cluster-binding residues include C36, C37, C101, and C131.

This sequence belongs to the complex I 20 kDa subunit family. In terms of assembly, NDH-1 is composed of 14 different subunits. Subunits NuoB, C, D, E, F, and G constitute the peripheral sector of the complex. [4Fe-4S] cluster is required as a cofactor.

It localises to the cell inner membrane. The catalysed reaction is a quinone + NADH + 5 H(+)(in) = a quinol + NAD(+) + 4 H(+)(out). NDH-1 shuttles electrons from NADH, via FMN and iron-sulfur (Fe-S) centers, to quinones in the respiratory chain. The immediate electron acceptor for the enzyme in this species is believed to be ubiquinone. Couples the redox reaction to proton translocation (for every two electrons transferred, four hydrogen ions are translocated across the cytoplasmic membrane), and thus conserves the redox energy in a proton gradient. In Francisella philomiragia subsp. philomiragia (strain ATCC 25017 / CCUG 19701 / FSC 153 / O#319-036), this protein is NADH-quinone oxidoreductase subunit B.